The primary structure comprises 189 residues: Marginal zone B- and B1-cell-specific protein (189 aa).

An N-terminal signal peptide occupies residues 1-22 (MRLSLPLLLLLLGAWAIPGGLG). 3 disulfide bridges follow: Cys-50/Cys-178, Cys-53/Cys-171, and Cys-95/Cys-143. The Prevents secretion from ER motif lies at 186-189 (REEL).

This sequence belongs to the MZB1 family. Part of the ER chaperone complex, a multi-protein complex in the endoplasmic reticulum containing a large number of molecular chaperones which associates with unassembled incompletely folded immunoglobulin heavy chains. Isoform 2 interacts with CASP2 and CASP9. Interacts with HSP90B1 and PDIA3 in a calcium-dependent manner. Forms an interchain disulfide bond with IgM monomers. In terms of tissue distribution, widely expressed with highest levels in adult brain, small intestine and lymphoid tissues such as thymus and spleen. Expression is frequently lower in intestinal-type gastric cancer. In obese patients, more abundant in omental than in subcutaneous fat.

The protein resides in the endoplasmic reticulum lumen. Its subcellular location is the secreted. It is found in the cytoplasm. Functionally, associates with immunoglobulin M (IgM) heavy and light chains and promotes IgM assembly and secretion. May exert its effect by acting as a molecular chaperone or as an oxidoreductase as it displays a low level of oxidoreductase activity. Isoform 2 may be involved in regulation of apoptosis. Helps to diversify peripheral B-cell functions by regulating Ca(2+) stores, antibody secretion and integrin activation. Its function is as follows. Acts as a hormone-regulated adipokine/pro-inflammatory cytokine that is implicated in causing chronic inflammation, affecting cellular expansion and blunting insulin response in adipocytes. May have a role in the onset of insulin resistance. The chain is Marginal zone B- and B1-cell-specific protein (MZB1) from Homo sapiens (Human).